Here is a 108-residue protein sequence, read N- to C-terminus: Class I hydrophobin hgfII (108 aa).

The N-terminal stretch at 1–19 (MFSRIAAVSFLALPLLAAA) is a signal peptide. 4 disulfide bridges follow: Cys-28/Cys-89, Cys-35/Cys-83, Cys-36/Cys-69, and Cys-90/Cys-103. Asn-92 is a glycosylation site (N-linked (GlcNAc...) asparagine).

It belongs to the fungal hydrophobin family. Self-assembles to form functional amyloid fibrils called rodlets with a diameter of 15-30 nm. Self-assembly into fibrillar rodlets occurs spontaneously at hydrophobic:hydrophilic interfaces and the rodlets further associate laterally to form amphipathic monolayers. Highky expressed in hyphae cultured in liquid medium.

It is found in the secreted. It localises to the cell wall. In terms of biological role, aerial growth, conidiation, and dispersal of filamentous fungi in the environment rely upon a capability of their secreting small amphipathic proteins called hydrophobins (HPBs) with low sequence identity. Class I can self-assemble into an outermost layer of rodlet bundles on aerial cell surfaces, conferring cellular hydrophobicity that supports fungal growth, development and dispersal; whereas Class II form highly ordered films at water-air interfaces through intermolecular interactions but contribute nothing to the rodlet structure. HgfII is a class I hydrophobin that is involved in cell surface hydrophobicity and might play a key role during the growth and development of hyphae cultured in liquid medium. This chain is Class I hydrophobin hgfII, found in Grifola frondosa (Maitake).